The following is a 901-amino-acid chain: Pantothenate kinase 2 (901 aa).

Residues 1–10 are compositionally biased toward acidic residues; it reads MAGQEDEYDP. Residues 1-50 form a disordered region; that stretch reads MAGQEDEYDPILDNKREAEAKSQVSVAADKNMAPSTSGTPIHRSGSRPQL. The tract at residues 1-466 is pantothenate kinase; that stretch reads MAGQEDEYDP…LGDLDEKISW (466 aa). The segment at 467 to 901 is 4'-phosphopantetheine phosphatase; the sequence is MEKFVRRGTE…CVCRYEPPSL (435 aa). Residues D731, N732, and D767 each coordinate Mn(2+). Residues 851 to 855 carry the Subfamily II EGMGR motif motif; sequence EGMGR.

It in the N-terminal section; belongs to the type II pantothenate kinase family. This sequence in the C-terminal section; belongs to the damage-control phosphatase family. Phosphopantetheine phosphatase II subfamily. Mn(2+) serves as cofactor. The cofactor is Ni(2+). In terms of tissue distribution, highly expressed in leaves and developing seeds. Expressed in roots, stems and flowers.

The enzyme catalyses (R)-pantothenate + ATP = (R)-4'-phosphopantothenate + ADP + H(+). It catalyses the reaction (R)-4'-phosphopantothenate + H2O = (R)-pantothenate + phosphate. It carries out the reaction (R)-4'-phosphopantetheine + H2O = (R)-pantetheine + phosphate. The catalysed reaction is (R)-4'-phosphopantetheine sulfonate + H2O = (R)-pantetheine sulfonate + phosphate. It participates in cofactor biosynthesis; coenzyme A biosynthesis; CoA from (R)-pantothenate: step 1/5. Its activity is regulated as follows. Activity is strongly promoted by Co(2+), Ni(2+) and Mn(2+). Activity is inhibited by EDTA. Its function is as follows. Catalyzes the phosphorylation of pantothenate the first step in CoA biosynthesis. May play a role in the physiological regulation of the intracellular CoA concentration. Functionally redudant with PANK1. The phosphatase activity shows preference for normal or oxidatively damaged intermediates of 4'-phosphopantetheine, which provides strong indirect evidence that the phosphatase activity pre-empts damage in the CoA pathway. Hydrolyzing excess 4'-phosphopantetheine could constitute a directed overflow mechanism to prevent its oxidation to the S-sulfonate, sulfonate, or other forms. Hydrolyzing 4'-phosphopantetheine sulfonate or S-sulfonate would forestall their conversion to inactive forms of CoA and acyl carrier protein. This chain is Pantothenate kinase 2 (PANK2), found in Arabidopsis thaliana (Mouse-ear cress).